Reading from the N-terminus, the 735-residue chain is Photosystem I P700 chlorophyll a apoprotein A2 (735 aa).

Helical transmembrane passes span 47-70, 136-159, 176-200, 274-292, 331-354, 370-396, 418-440, and 518-536; these read IFAS…FHVA, LYIG…LHLQ, LNHH…HVAI, MAHH…GHMY, LHFQ…QHMY, ASLY…IFFI, AIIS…LYVH, and FLVH…LILV. [4Fe-4S] cluster contacts are provided by C560 and C569. Helical transmembrane passes span 576 to 597 and 644 to 666; these read AFYL…YFHW and LSVW…MFLI. 3 residues coordinate chlorophyll a: H655, M663, and Y671. W672 serves as a coordination point for phylloquinone. Residues 708 to 728 form a helical membrane-spanning segment; sequence VVGLAHFSAGYILTYAAFLIA.

This sequence belongs to the PsaA/PsaB family. In terms of assembly, the PsaA/B heterodimer binds the P700 chlorophyll special pair and subsequent electron acceptors. PSI consists of a core antenna complex that captures photons, and an electron transfer chain that converts photonic excitation into a charge separation. The eukaryotic PSI reaction center is composed of at least 11 subunits. Requires P700 is a chlorophyll a/chlorophyll a' dimer, A0 is one or more chlorophyll a, A1 is one or both phylloquinones and FX is a shared 4Fe-4S iron-sulfur center. as cofactor.

Its subcellular location is the plastid. It localises to the chloroplast thylakoid membrane. The enzyme catalyses reduced [plastocyanin] + hnu + oxidized [2Fe-2S]-[ferredoxin] = oxidized [plastocyanin] + reduced [2Fe-2S]-[ferredoxin]. In terms of biological role, psaA and PsaB bind P700, the primary electron donor of photosystem I (PSI), as well as the electron acceptors A0, A1 and FX. PSI is a plastocyanin/cytochrome c6-ferredoxin oxidoreductase, converting photonic excitation into a charge separation, which transfers an electron from the donor P700 chlorophyll pair to the spectroscopically characterized acceptors A0, A1, FX, FA and FB in turn. Oxidized P700 is reduced on the lumenal side of the thylakoid membrane by plastocyanin or cytochrome c6. The protein is Photosystem I P700 chlorophyll a apoprotein A2 of Tupiella akineta (Green alga).